The following is a 129-amino-acid chain: Small ribosomal subunit protein uS12 (129 aa).

3-methylthioaspartic acid is present on Asp89. A disordered region spans residues 101–129; it reads TLDTSGVSDRKQSRSKYGAKQPKAVAAKK.

This sequence belongs to the universal ribosomal protein uS12 family. Part of the 30S ribosomal subunit. Contacts proteins S8 and S17. May interact with IF1 in the 30S initiation complex.

With S4 and S5 plays an important role in translational accuracy. Its function is as follows. Interacts with and stabilizes bases of the 16S rRNA that are involved in tRNA selection in the A site and with the mRNA backbone. Located at the interface of the 30S and 50S subunits, it traverses the body of the 30S subunit contacting proteins on the other side and probably holding the rRNA structure together. The combined cluster of proteins S8, S12 and S17 appears to hold together the shoulder and platform of the 30S subunit. The protein is Small ribosomal subunit protein uS12 of Chlorobium luteolum (strain DSM 273 / BCRC 81028 / 2530) (Pelodictyon luteolum).